A 129-amino-acid polypeptide reads, in one-letter code: Small ribosomal subunit protein uS11 (129 aa).

This sequence belongs to the universal ribosomal protein uS11 family. Part of the 30S ribosomal subunit. Interacts with proteins S7 and S18. Binds to IF-3.

Functionally, located on the platform of the 30S subunit, it bridges several disparate RNA helices of the 16S rRNA. Forms part of the Shine-Dalgarno cleft in the 70S ribosome. The protein is Small ribosomal subunit protein uS11 of Nitrosomonas europaea (strain ATCC 19718 / CIP 103999 / KCTC 2705 / NBRC 14298).